A 424-amino-acid chain; its full sequence is tRNA (guanine-N(7)-)-methyltransferase non-catalytic subunit wuho (424 aa).

Residues 42 to 92 (LKGHTSQSQESCTAAAAASTATAASGQAPGGKEQQLANQPEEGGTSASASG) are disordered. Residues 46–68 (TSQSQESCTAAAAASTATAASGQ) are compositionally biased toward low complexity. 4 WD repeats span residues 96-137 (ATST…ARLL), 184-223 (GHLS…DIHS), 227-265 (GHRE…ELLQ), and 324-364 (AGSW…PASS).

This sequence belongs to the WD repeat TRM82 family. In terms of assembly, forms a heterodimer with the catalytic subunit Mettl1. Interacts with mei-P26 and weakly interacts with bgcn; required for the function or formation of the mei-P26-bgcn-bam-sxl complex. Interacts with nanos; may be involved in mei-P26-dependent derepression of the BMP signaling pathway. Interacts with Myc; the interaction may be mediated by mei-P26 and may be involved in the regulation of ribosome biogenesis. In testis, it is present at high level in hub cells, a niche for germline stem cells of testis. Ubiquitously expressed in all testicular cells throughout spermatogenesis. Ubiquitously expressed in all germline and somatic cells of the ovary.

It is found in the nucleus. Its subcellular location is the cytoplasm. Its pathway is tRNA modification; N(7)-methylguanine-tRNA biosynthesis. Required for the Mettl1-dependent formation of N(7)-methylguanine at position 46 (m7G46) in tRNA. In the Mettl1-wuho methyltransferase complex, it is required to stabilize and induce conformational changes of the catalytic subunit. Required for binding of nanos mRNA and repression of translation by the mei-P26-bgcn-bam-sxl complex. May cooperate with mei-P26 and nanos to derepress the BMP signaling pathway. May cooperate with mei-P26 to suppress expression of a subset of microRNAs. May cooperate with mei-P26 to regulate bam expression levels in germline cells during gametogenesis. Required to promote mitosis to meiosis transition during gametogenesis. May regulate germline cell division in part by regulating ribosome biogenesis. The protein is tRNA (guanine-N(7)-)-methyltransferase non-catalytic subunit wuho of Drosophila melanogaster (Fruit fly).